We begin with the raw amino-acid sequence, 118 residues long: Large ribosomal subunit protein bL20 (118 aa).

Belongs to the bacterial ribosomal protein bL20 family.

Binds directly to 23S ribosomal RNA and is necessary for the in vitro assembly process of the 50S ribosomal subunit. It is not involved in the protein synthesizing functions of that subunit. The sequence is that of Large ribosomal subunit protein bL20 from Stutzerimonas stutzeri (strain A1501) (Pseudomonas stutzeri).